We begin with the raw amino-acid sequence, 193 residues long: Annexin-2 receptor (193 aa).

Positions Gln78–Lys87 are enriched in polar residues. The interval Gln78–Glu111 is disordered.

As to expression, widely expressed. Highly expressed in lymphocytes. Expressed in both resting CD4(+) and CD8(+) T-cells.

Its function is as follows. May act as a receptor for annexin II on marrow stromal cells to induce osteoclast formation. The chain is Annexin-2 receptor (ANXA2R) from Homo sapiens (Human).